A 122-amino-acid chain; its full sequence is Large ribosomal subunit protein uL14 (122 aa).

The protein belongs to the universal ribosomal protein uL14 family. In terms of assembly, part of the 50S ribosomal subunit. Forms a cluster with proteins L3 and L19. In the 70S ribosome, L14 and L19 interact and together make contacts with the 16S rRNA in bridges B5 and B8.

Its function is as follows. Binds to 23S rRNA. Forms part of two intersubunit bridges in the 70S ribosome. The chain is Large ribosomal subunit protein uL14 from Treponema denticola (strain ATCC 35405 / DSM 14222 / CIP 103919 / JCM 8153 / KCTC 15104).